Consider the following 416-residue polypeptide: F-box/FBD/LRR-repeat protein At1g13570 (416 aa).

The F-box domain maps to Pro5–Lys53. LRR repeat units follow at residues Val115–His142, Gln164–Tyr189, Met203–Met229, Phe238–Ile263, and Cys294–Ala321. The 39-residue stretch at Leu346–Ser384 folds into the FBD domain.

The sequence is that of F-box/FBD/LRR-repeat protein At1g13570 from Arabidopsis thaliana (Mouse-ear cress).